A 398-amino-acid chain; its full sequence is RNA exonuclease 3 (398 aa).

The region spanning 239-385 is the Exonuclease domain; the sequence is VLALDCEMGF…QDAIAAMDII (147 aa).

Belongs to the REXO1/REXO3 family.

Its subcellular location is the cytoplasm. It localises to the nucleus. Functionally, 3' to 5' exoribonuclease required for proper 3' end maturation of MRP RNA and of the U5L snRNA. The chain is RNA exonuclease 3 (REX3) from Candida glabrata (strain ATCC 2001 / BCRC 20586 / JCM 3761 / NBRC 0622 / NRRL Y-65 / CBS 138) (Yeast).